An 877-amino-acid polypeptide reads, in one-letter code: Alanine--tRNA ligase (877 aa).

The Zn(2+) site is built by histidine 565, histidine 569, cysteine 667, and histidine 671.

The protein belongs to the class-II aminoacyl-tRNA synthetase family. Requires Zn(2+) as cofactor.

Its subcellular location is the cytoplasm. It catalyses the reaction tRNA(Ala) + L-alanine + ATP = L-alanyl-tRNA(Ala) + AMP + diphosphate. In terms of biological role, catalyzes the attachment of alanine to tRNA(Ala) in a two-step reaction: alanine is first activated by ATP to form Ala-AMP and then transferred to the acceptor end of tRNA(Ala). Also edits incorrectly charged Ser-tRNA(Ala) and Gly-tRNA(Ala) via its editing domain. The polypeptide is Alanine--tRNA ligase (Chromobacterium violaceum (strain ATCC 12472 / DSM 30191 / JCM 1249 / CCUG 213 / NBRC 12614 / NCIMB 9131 / NCTC 9757 / MK)).